The sequence spans 1044 residues: Disease resistance protein PIK6-NP (1044 aa).

Residues 3–184 are structured coiled coil (CC) domain; it reads LAVGASEATM…PQIVSIKEPV (182 aa). The NB-ARC domain occupies 187–543; the sequence is KTVMENLEKW…IAEGFATEKQ (357 aa). The interval 258-302 is disordered; sequence QVSKQEEAGGSTESSSRDENTREPQGSSSTSSREENTAESGTKRM. LRR repeat units follow at residues 635-657, 682-705, and 706-728; these read LAQV…SFNY, MLVL…IEKL, and EYLE…VGQL. Positions 737–771 are disordered; it reads GNKNTRKGLRLPQEKRNKAMKNPSPQGKTKEPAEK. 6 LRR repeats span residues 808 to 834, 840 to 862, 866 to 888, 889 to 911, 935 to 958, and 980 to 1004; these read LTGL…LLSS, SCGL…LYNM, PRYL…ITSI, TTLN…ILRN, KGIL…EFKS, and MPAL…ILEN.

This sequence belongs to the disease resistance NB-LRR family.

In terms of biological role, probable disease resistance protein. Resistance proteins guard the plant against pathogens that contain an appropriate avirulence protein via an indirect interaction with this avirulence protein. That triggers a defense system including the hypersensitive response, which restricts the pathogen growth. At the opposite of cultivar Kusabue, the cultivar Nipponbare doesn't recognize the effector avirulence protein AVR-Pik from M.oryzae. This chain is Disease resistance protein PIK6-NP, found in Oryza sativa subsp. japonica (Rice).